A 78-amino-acid chain; its full sequence is RNA-binding protein Hfq (78 aa).

In terms of domain architecture, Sm spans 10–69; the sequence is DPFLNTLRKEHVPVSIYLVNGIKLQGQIESFDQYVVLLRNTVTQMVYKHAISTVVPARAV.

This sequence belongs to the Hfq family. In terms of assembly, homohexamer.

RNA chaperone that binds small regulatory RNA (sRNAs) and mRNAs to facilitate mRNA translational regulation in response to envelope stress, environmental stress and changes in metabolite concentrations. Also binds with high specificity to tRNAs. The sequence is that of RNA-binding protein Hfq from Bordetella bronchiseptica (strain ATCC BAA-588 / NCTC 13252 / RB50) (Alcaligenes bronchisepticus).